Consider the following 245-residue polypeptide: tRNA1(Val) (adenine(37)-N6)-methyltransferase (245 aa).

Belongs to the methyltransferase superfamily. tRNA (adenine-N(6)-)-methyltransferase family.

The protein localises to the cytoplasm. It carries out the reaction adenosine(37) in tRNA1(Val) + S-adenosyl-L-methionine = N(6)-methyladenosine(37) in tRNA1(Val) + S-adenosyl-L-homocysteine + H(+). Specifically methylates the adenine in position 37 of tRNA(1)(Val) (anticodon cmo5UAC). This chain is tRNA1(Val) (adenine(37)-N6)-methyltransferase, found in Shigella sonnei (strain Ss046).